The following is a 277-amino-acid chain: Large ribosomal subunit protein uL2 (277 aa).

Disordered regions lie at residues 24 to 55 and 221 to 277; these read ITTSTPEKSLLRPLKKKAGRNNQGKLTVRHHG and RGSV…RKKK.

The protein belongs to the universal ribosomal protein uL2 family. Part of the 50S ribosomal subunit. Forms a bridge to the 30S subunit in the 70S ribosome.

Functionally, one of the primary rRNA binding proteins. Required for association of the 30S and 50S subunits to form the 70S ribosome, for tRNA binding and peptide bond formation. It has been suggested to have peptidyltransferase activity; this is somewhat controversial. Makes several contacts with the 16S rRNA in the 70S ribosome. The sequence is that of Large ribosomal subunit protein uL2 from Listeria welshimeri serovar 6b (strain ATCC 35897 / DSM 20650 / CCUG 15529 / CIP 8149 / NCTC 11857 / SLCC 5334 / V8).